The primary structure comprises 174 residues: Putative FAS1 domain-containing protein 096L (174 aa).

The region spanning 36–171 is the FAS1 domain; that stretch reads PDTLWSKLNE…GIIHLMEEVY (136 aa).

In Acheta domesticus (House cricket), this protein is Putative FAS1 domain-containing protein 096L.